The chain runs to 454 residues: Probable spastin homolog Bm1_53365 (454 aa).

218–225 (GPPGNGKT) is a binding site for ATP.

The protein belongs to the AAA ATPase family. Spastin subfamily. As to quaternary structure, homohexamer. The homohexamer is stabilized by ATP-binding. The homohexamer may adopt a ring conformation through which microtubules pass prior to being severed. Interacts with microtubules.

The protein localises to the cytoplasm. Its subcellular location is the cytoskeleton. It is found in the perinuclear region. It catalyses the reaction n ATP + n H2O + a microtubule = n ADP + n phosphate + (n+1) alpha/beta tubulin heterodimers.. Its function is as follows. Severs microtubules, probably in an ATP-dependent fashion. This is Probable spastin homolog Bm1_53365 from Brugia malayi (Filarial nematode worm).